A 70-amino-acid polypeptide reads, in one-letter code: Small ribosomal subunit protein bS21 (70 aa).

Belongs to the bacterial ribosomal protein bS21 family.

This Cupriavidus pinatubonensis (strain JMP 134 / LMG 1197) (Cupriavidus necator (strain JMP 134)) protein is Small ribosomal subunit protein bS21.